The chain runs to 263 residues: Ribonuclease HII (263 aa).

An RNase H type-2 domain is found at 39 to 257 (AFFTGIDEAG…VKPAAAPHAA (219 aa)). Residues Asp-45, Glu-46, and Asp-157 each coordinate a divalent metal cation.

It belongs to the RNase HII family. Requires Mn(2+) as cofactor. The cofactor is Mg(2+).

The protein resides in the cytoplasm. The enzyme catalyses Endonucleolytic cleavage to 5'-phosphomonoester.. In terms of biological role, endonuclease that specifically degrades the RNA of RNA-DNA hybrids. This chain is Ribonuclease HII, found in Oleidesulfovibrio alaskensis (strain ATCC BAA-1058 / DSM 17464 / G20) (Desulfovibrio alaskensis).